A 272-amino-acid polypeptide reads, in one-letter code: NH(3)-dependent NAD(+) synthetase (272 aa).

Position 45-52 (45-52 (GISGGQDS)) interacts with ATP. Aspartate 51 is a binding site for Mg(2+). Residue arginine 138 participates in deamido-NAD(+) binding. Threonine 158 contributes to the ATP binding site. Glutamate 163 provides a ligand contact to Mg(2+). Deamido-NAD(+) contacts are provided by lysine 171 and aspartate 178. The ATP site is built by lysine 187 and threonine 209. 258 to 259 (HK) serves as a coordination point for deamido-NAD(+).

It belongs to the NAD synthetase family. Homodimer.

The catalysed reaction is deamido-NAD(+) + NH4(+) + ATP = AMP + diphosphate + NAD(+) + H(+). Its pathway is cofactor biosynthesis; NAD(+) biosynthesis; NAD(+) from deamido-NAD(+) (ammonia route): step 1/1. In terms of biological role, catalyzes the ATP-dependent amidation of deamido-NAD to form NAD. Uses ammonia as a nitrogen source. This chain is NH(3)-dependent NAD(+) synthetase, found in Bacillus cereus (strain ATCC 10987 / NRS 248).